The chain runs to 315 residues: Biotin synthase (315 aa).

Residues 39–266 (NSLQFATLLS…KSAIRLTAGR (228 aa)) form the Radical SAM core domain. [4Fe-4S] cluster-binding residues include Cys54, Cys58, and Cys61. Positions 98, 129, 189, and 261 each coordinate [2Fe-2S] cluster.

This sequence belongs to the radical SAM superfamily. Biotin synthase family. As to quaternary structure, homodimer. [4Fe-4S] cluster serves as cofactor. It depends on [2Fe-2S] cluster as a cofactor.

It carries out the reaction (4R,5S)-dethiobiotin + (sulfur carrier)-SH + 2 reduced [2Fe-2S]-[ferredoxin] + 2 S-adenosyl-L-methionine = (sulfur carrier)-H + biotin + 2 5'-deoxyadenosine + 2 L-methionine + 2 oxidized [2Fe-2S]-[ferredoxin]. Its pathway is cofactor biosynthesis; biotin biosynthesis; biotin from 7,8-diaminononanoate: step 2/2. Catalyzes the conversion of dethiobiotin (DTB) to biotin by the insertion of a sulfur atom into dethiobiotin via a radical-based mechanism. The polypeptide is Biotin synthase (Legionella pneumophila (strain Corby)).